Here is a 199-residue protein sequence, read N- to C-terminus: ATP synthase subunit b (199 aa).

The chain crosses the membrane as a helical span at residues S5–A25.

Belongs to the ATPase B chain family. F-type ATPases have 2 components, F(1) - the catalytic core - and F(0) - the membrane proton channel. F(1) has five subunits: alpha(3), beta(3), gamma(1), delta(1), epsilon(1). F(0) has three main subunits: a(1), b(2) and c(10-14). The alpha and beta chains form an alternating ring which encloses part of the gamma chain. F(1) is attached to F(0) by a central stalk formed by the gamma and epsilon chains, while a peripheral stalk is formed by the delta and b chains.

It is found in the cell inner membrane. Its function is as follows. F(1)F(0) ATP synthase produces ATP from ADP in the presence of a proton or sodium gradient. F-type ATPases consist of two structural domains, F(1) containing the extramembraneous catalytic core and F(0) containing the membrane proton channel, linked together by a central stalk and a peripheral stalk. During catalysis, ATP synthesis in the catalytic domain of F(1) is coupled via a rotary mechanism of the central stalk subunits to proton translocation. Component of the F(0) channel, it forms part of the peripheral stalk, linking F(1) to F(0). The chain is ATP synthase subunit b from Citrifermentans bemidjiense (strain ATCC BAA-1014 / DSM 16622 / JCM 12645 / Bem) (Geobacter bemidjiensis).